We begin with the raw amino-acid sequence, 847 residues long: Protein HIR2 (847 aa).

WD repeat units lie at residues 10 to 46 (LHDG…NAAT), 113 to 153 (KDNE…LKSS), 155 to 194 (ELKS…TTKL), 259 to 305 (KFSP…PLFD), and 309 to 348 (VVNS…LGDV). The disordered stretch occupies residues 368 to 399 (PFKPKAEEPDTKLPPNKTAQQTTTNSKKQPKA). Over residues 384–394 (KTAQQTTTNSK) the composition is skewed to polar residues. WD repeat units lie at residues 508-548 (RKDN…IYVT) and 558-597 (PMLL…IAFP).

Belongs to the WD repeat HIR1 family.

Its subcellular location is the nucleus. In terms of biological role, required for replication-independent chromatin assembly and for the periodic repression of histone gene transcription during the cell cycle. This is Protein HIR2 (HIR2) from Kluyveromyces lactis (strain ATCC 8585 / CBS 2359 / DSM 70799 / NBRC 1267 / NRRL Y-1140 / WM37) (Yeast).